Here is a 193-residue protein sequence, read N- to C-terminus: Small ribosomal subunit protein uS7 (193 aa).

It belongs to the universal ribosomal protein uS7 family. As to quaternary structure, part of the 30S ribosomal subunit.

In terms of biological role, one of the primary rRNA binding proteins, it binds directly to 16S rRNA where it nucleates assembly of the head domain of the 30S subunit. Is located at the subunit interface close to the decoding center. This is Small ribosomal subunit protein uS7 from Saccharolobus solfataricus (strain ATCC 35092 / DSM 1617 / JCM 11322 / P2) (Sulfolobus solfataricus).